The chain runs to 153 residues: Superoxide dismutase [Cu-Zn] (153 aa).

Cu cation is bound by residues histidine 45, histidine 47, and histidine 62. Residues cysteine 56 and cysteine 145 are joined by a disulfide bond. Zn(2+) is bound by residues histidine 62, histidine 70, histidine 79, and aspartate 82. Histidine 119 contacts Cu cation.

Belongs to the Cu-Zn superoxide dismutase family. Homodimer. Cu cation is required as a cofactor. Zn(2+) serves as cofactor.

The protein localises to the cytoplasm. It carries out the reaction 2 superoxide + 2 H(+) = H2O2 + O2. Functionally, destroys radicals which are normally produced within the cells and which are toxic to biological systems. In Chymomyza amoena, this protein is Superoxide dismutase [Cu-Zn] (Sod).